We begin with the raw amino-acid sequence, 1158 residues long: Phospholipid-transporting ATPase 1 (1158 aa).

The segment covering 1–15 (MDPRKSIDKPPHHDP) has biased composition (basic and acidic residues). Positions 1-30 (MDPRKSIDKPPHHDPILGVSSRWSVSSKDN) are disordered. Residues 1–100 (MDPRKSIDKP…TAKYSVFTFL (100 aa)) lie on the Cytoplasmic side of the membrane. A helical membrane pass occupies residues 101-122 (PRNLFEQFHRVAYIYFLVIAVL). Over 123–127 (NQLPQ) the chain is Extracellular. Residues 128–150 (LAVFGRGASIMPLAFVLLVSAIK) form a helical membrane-spanning segment. Residues 151 to 329 (DAYEDFRRHR…SRLETRMNLE (179 aa)) are Cytoplasmic-facing. Residues 330 to 351 (IILLSLFLIVLCTIAAATAAVW) form a helical membrane-spanning segment. The Extracellular segment spans residues 352 to 391 (LRTHRDDLDTILFYRRKDYSERPGGKNYKYYGWGWEIFFT). The chain crosses the membrane as a helical span at residues 392–409 (FFMAVIVYQIMIPISLYI). Topologically, residues 410–914 (SMELVRIGQA…HGHWNYQRMG (505 aa)) are cytoplasmic. Catalysis depends on Asp-457, which acts as the 4-aspartylphosphate intermediate. Positions 859 and 863 each coordinate Mg(2+). Residues 915–934 (YMILYNFYRNAVFVLILFWY) traverse the membrane as a helical segment. At 935–948 (VLFTCYTLTTAITE) the chain is on the extracellular side. Residues 949 to 968 (WSSVLYSVIYTAIPTIIIGI) form a helical membrane-spanning segment. The Cytoplasmic segment spans residues 969 to 998 (LDKDLGRQTLLDHPQLYGVGQRAEGYSTTL). Residues 999–1020 (FWYTMIDTIWQSAAIFFIPMFA) form a helical membrane-spanning segment. Over 1021 to 1027 (YWGSTID) the chain is Extracellular. The chain crosses the membrane as a helical span at residues 1028-1050 (TSSLGDLWTIAAVVVVNLHLAMD). Topologically, residues 1051–1056 (VIRWNW) are cytoplasmic. Residues 1057 to 1077 (ITHAAIWGSIVAACICVIVID) traverse the membrane as a helical segment. Over 1078–1090 (VIPTLPGYWAIFQ) the chain is Extracellular. Residues 1091–1115 (VGKTWMFWFCLLAIVVTSLLPRFAI) traverse the membrane as a helical segment. The Cytoplasmic segment spans residues 1116-1158 (KFLVEYYRPSDVRIAREAEKLGTFRESQPVGVEMNLIQDPPRR).

It belongs to the cation transport ATPase (P-type) (TC 3.A.3) family. Type IV subfamily. Expressed in roots, flowers, anthers, leaves, vascular tissues and stems.

Its subcellular location is the endoplasmic reticulum membrane. The protein resides in the cell membrane. It catalyses the reaction ATP + H2O + phospholipidSide 1 = ADP + phosphate + phospholipidSide 2.. In terms of biological role, involved in transport of phospholipids. Contributes to transmembrane flipping of lipids. Has activity with phosphatidylserine and with a much lower efficiency with phosphatidylethanolamine, but not with phosphatidylcholine. The polypeptide is Phospholipid-transporting ATPase 1 (Arabidopsis thaliana (Mouse-ear cress)).